Reading from the N-terminus, the 380-residue chain is Homoserine O-acetyltransferase (380 aa).

Residues 59-363 enclose the AB hydrolase-1 domain; it reads NVVMVLHALT…IYGHDGFLVE (305 aa). The active-site Nucleophile is the Ser164. Arg234 lines the substrate pocket. Catalysis depends on residues Asp327 and His357. Asp358 serves as a coordination point for substrate.

It belongs to the AB hydrolase superfamily. MetX family. In terms of assembly, homodimer.

It is found in the cytoplasm. The enzyme catalyses L-homoserine + acetyl-CoA = O-acetyl-L-homoserine + CoA. It functions in the pathway amino-acid biosynthesis; L-methionine biosynthesis via de novo pathway; O-acetyl-L-homoserine from L-homoserine: step 1/1. Functionally, transfers an acetyl group from acetyl-CoA to L-homoserine, forming acetyl-L-homoserine. This is Homoserine O-acetyltransferase from Mycolicibacterium smegmatis (strain ATCC 700084 / mc(2)155) (Mycobacterium smegmatis).